A 108-amino-acid chain; its full sequence is Phosphoribosyl-ATP pyrophosphatase (108 aa).

This sequence belongs to the PRA-PH family.

Its subcellular location is the cytoplasm. The enzyme catalyses 1-(5-phospho-beta-D-ribosyl)-ATP + H2O = 1-(5-phospho-beta-D-ribosyl)-5'-AMP + diphosphate + H(+). It participates in amino-acid biosynthesis; L-histidine biosynthesis; L-histidine from 5-phospho-alpha-D-ribose 1-diphosphate: step 2/9. The chain is Phosphoribosyl-ATP pyrophosphatase from Trichlorobacter lovleyi (strain ATCC BAA-1151 / DSM 17278 / SZ) (Geobacter lovleyi).